A 331-amino-acid polypeptide reads, in one-letter code: 7,8-didemethyl-8-hydroxy-5-deazariboflavin synthase (331 aa).

In terms of domain architecture, Radical SAM core spans 6 to 244 (ITFSKNAFLP…ADVAVQIPPN (239 aa)). [4Fe-4S] cluster contacts are provided by Cys20, Cys24, and Cys27.

Belongs to the radical SAM superfamily. CofG family. Consists of two subunits, CofG and CofH. Requires [4Fe-4S] cluster as cofactor.

The catalysed reaction is 5-amino-5-(4-hydroxybenzyl)-6-(D-ribitylimino)-5,6-dihydrouracil + S-adenosyl-L-methionine = 7,8-didemethyl-8-hydroxy-5-deazariboflavin + 5'-deoxyadenosine + L-methionine + NH4(+) + H(+). It functions in the pathway cofactor biosynthesis; coenzyme F0 biosynthesis. Its function is as follows. Catalyzes the radical-mediated synthesis of 7,8-didemethyl-8-hydroxy-5-deazariboflavin from 5-amino-5-(4-hydroxybenzyl)-6-(D-ribitylimino)-5,6-dihydrouracil. The sequence is that of 7,8-didemethyl-8-hydroxy-5-deazariboflavin synthase from Methanoculleus marisnigri (strain ATCC 35101 / DSM 1498 / JR1).